The sequence spans 286 residues: Phosphatidylserine decarboxylase proenzyme (286 aa).

Active-site charge relay system; for autoendoproteolytic cleavage activity residues include D90, H147, and S252. S252 (schiff-base intermediate with substrate; via pyruvic acid; for decarboxylase activity) is an active-site residue. At S252 the chain carries Pyruvic acid (Ser); by autocatalysis.

It belongs to the phosphatidylserine decarboxylase family. PSD-B subfamily. Prokaryotic type I sub-subfamily. As to quaternary structure, heterodimer of a large membrane-associated beta subunit and a small pyruvoyl-containing alpha subunit. Requires pyruvate as cofactor. Is synthesized initially as an inactive proenzyme. Formation of the active enzyme involves a self-maturation process in which the active site pyruvoyl group is generated from an internal serine residue via an autocatalytic post-translational modification. Two non-identical subunits are generated from the proenzyme in this reaction, and the pyruvate is formed at the N-terminus of the alpha chain, which is derived from the carboxyl end of the proenzyme. The autoendoproteolytic cleavage occurs by a canonical serine protease mechanism, in which the side chain hydroxyl group of the serine supplies its oxygen atom to form the C-terminus of the beta chain, while the remainder of the serine residue undergoes an oxidative deamination to produce ammonia and the pyruvoyl prosthetic group on the alpha chain. During this reaction, the Ser that is part of the protease active site of the proenzyme becomes the pyruvoyl prosthetic group, which constitutes an essential element of the active site of the mature decarboxylase.

The protein localises to the cell membrane. The enzyme catalyses a 1,2-diacyl-sn-glycero-3-phospho-L-serine + H(+) = a 1,2-diacyl-sn-glycero-3-phosphoethanolamine + CO2. It functions in the pathway phospholipid metabolism; phosphatidylethanolamine biosynthesis; phosphatidylethanolamine from CDP-diacylglycerol: step 2/2. In terms of biological role, catalyzes the formation of phosphatidylethanolamine (PtdEtn) from phosphatidylserine (PtdSer). This is Phosphatidylserine decarboxylase proenzyme from Pseudomonas fluorescens (strain SBW25).